A 736-amino-acid chain; its full sequence is Microtubule-associated protein mu-2 (736 aa).

Belongs to the orthoreovirus mu-2 protein family. In terms of assembly, interacts with protein mu-NS; in viral inclusions. Interacts with polymerase lambda-3; this interaction stimulates the ATPase activity of mu-2. It depends on a divalent metal cation as a cofactor.

The protein resides in the virion. The protein localises to the host cytoplasm. It localises to the host cytoskeleton. Its function is as follows. Minor inner capsid (core) component. Displays NTPase and RNA 5'-triphosphatase (RTPase) activities. ATP is the preferred substrate for hydrolysis. May function as a cofactor of polymerase lambda-3. Associates with microtubules and plays a role in the formation, structural organization and morphology of viral inclusions, where the assembly of cores and the replication of viral RNA occur. Together with mu-NS, recruits the other core proteins to these inclusions. This chain is Microtubule-associated protein mu-2 (M1), found in Mammalia (T3D).